We begin with the raw amino-acid sequence, 284 residues long: Protein pxr1 (284 aa).

The region spanning 25–71 (TNRLGFKLLSSYGWVNGNGLGEKQHGRIHNIKVSLKDDTLGIGAKAT) is the G-patch domain. The segment at 149–253 (DEDRVCEDAS…KVKEGNRPAS (105 aa)) is disordered. 2 positions are modified to phosphoserine: Ser-159 and Ser-160. Composition is skewed to basic residues over residues 166–181 (EKRKKHSSKKKSKKKT) and 196–206 (TKKKKKEHKKK). Basic and acidic residues-rich tracts occupy residues 207-224 (DKESSSKKRKSGSSDKEE) and 233-249 (KDKPESTSSVEKVKEGN).

It belongs to the PINX1 family.

It localises to the nucleus. It is found in the nucleolus. In terms of biological role, involved in rRNA-processing at A0, A1 and A2 sites and negatively regulates telomerase. The polypeptide is Protein pxr1 (pxr1) (Schizosaccharomyces pombe (strain 972 / ATCC 24843) (Fission yeast)).